We begin with the raw amino-acid sequence, 321 residues long: tRNA pseudouridine synthase B (321 aa).

D47 acts as the Nucleophile in catalysis.

This sequence belongs to the pseudouridine synthase TruB family. Type 1 subfamily.

It catalyses the reaction uridine(55) in tRNA = pseudouridine(55) in tRNA. Its function is as follows. Responsible for synthesis of pseudouridine from uracil-55 in the psi GC loop of transfer RNAs. This Shewanella baltica (strain OS185) protein is tRNA pseudouridine synthase B.